Here is a 462-residue protein sequence, read N- to C-terminus: ATP synthase subunit beta (462 aa).

152 to 159 contributes to the ATP binding site; the sequence is GGAGVGKT.

This sequence belongs to the ATPase alpha/beta chains family. In terms of assembly, F-type ATPases have 2 components, CF(1) - the catalytic core - and CF(0) - the membrane proton channel. CF(1) has five subunits: alpha(3), beta(3), gamma(1), delta(1), epsilon(1). CF(0) has three main subunits: a(1), b(2) and c(9-12). The alpha and beta chains form an alternating ring which encloses part of the gamma chain. CF(1) is attached to CF(0) by a central stalk formed by the gamma and epsilon chains, while a peripheral stalk is formed by the delta and b chains.

It is found in the cell inner membrane. It catalyses the reaction ATP + H2O + 4 H(+)(in) = ADP + phosphate + 5 H(+)(out). In terms of biological role, produces ATP from ADP in the presence of a proton gradient across the membrane. The catalytic sites are hosted primarily by the beta subunits. The chain is ATP synthase subunit beta from Blochmanniella pennsylvanica (strain BPEN).